A 133-amino-acid chain; its full sequence is Ribosome-binding factor A (133 aa).

The protein belongs to the RbfA family. In terms of assembly, monomer. Binds 30S ribosomal subunits, but not 50S ribosomal subunits or 70S ribosomes.

It localises to the cytoplasm. In terms of biological role, one of several proteins that assist in the late maturation steps of the functional core of the 30S ribosomal subunit. Associates with free 30S ribosomal subunits (but not with 30S subunits that are part of 70S ribosomes or polysomes). Required for efficient processing of 16S rRNA. May interact with the 5'-terminal helix region of 16S rRNA. The chain is Ribosome-binding factor A from Chelativorans sp. (strain BNC1).